We begin with the raw amino-acid sequence, 364 residues long: Selenide, water dikinase (364 aa).

Selenocysteine 25 is an active-site residue. Residue selenocysteine 25 is a non-standard amino acid, selenocysteine. Residues lysine 28, 46–48, aspartate 66, aspartate 89, and 141–143 contribute to the ATP site; these read GYD and GQT. Aspartate 48 lines the Mg(2+) pocket. Aspartate 89 provides a ligand contact to Mg(2+). Residue aspartate 244 participates in Mg(2+) binding.

Belongs to the selenophosphate synthase 1 family. Class II subfamily. In terms of assembly, homodimer. It depends on Mg(2+) as a cofactor.

It catalyses the reaction hydrogenselenide + ATP + H2O = selenophosphate + AMP + phosphate + 2 H(+). Synthesizes selenophosphate from selenide and ATP. The sequence is that of Selenide, water dikinase (selD) from Dictyostelium discoideum (Social amoeba).